The sequence spans 93 residues: Large ribosomal subunit protein eL37A (93 aa).

Zn(2+)-binding residues include Cys-19, Cys-22, Cys-34, and Cys-37. The segment at 19-37 adopts a C4-type zinc-finger fold; that stretch reads CRRCGRSSYHIQKSTCAQC.

Belongs to the eukaryotic ribosomal protein eL37 family. Requires Zn(2+) as cofactor.

Its function is as follows. Binds to the 23S rRNA. The sequence is that of Large ribosomal subunit protein eL37A from Drosophila melanogaster (Fruit fly).